Consider the following 203-residue polypeptide: Outer-membrane lipoprotein LolB (203 aa).

A signal peptide spans Met1–Gly22. Cys23 is lipidated: N-palmitoyl cysteine. The S-diacylglycerol cysteine moiety is linked to residue Cys23.

It belongs to the LolB family. In terms of assembly, monomer.

The protein localises to the cell outer membrane. Functionally, plays a critical role in the incorporation of lipoproteins in the outer membrane after they are released by the LolA protein. This chain is Outer-membrane lipoprotein LolB, found in Shewanella denitrificans (strain OS217 / ATCC BAA-1090 / DSM 15013).